The following is a 183-amino-acid chain: Peptidyl-tRNA hydrolase (183 aa).

Tyr14 is a tRNA binding site. His19 (proton acceptor) is an active-site residue. 2 residues coordinate tRNA: Tyr60 and Asn62.

It belongs to the PTH family. Monomer.

It localises to the cytoplasm. It catalyses the reaction an N-acyl-L-alpha-aminoacyl-tRNA + H2O = an N-acyl-L-amino acid + a tRNA + H(+). Functionally, hydrolyzes ribosome-free peptidyl-tRNAs (with 1 or more amino acids incorporated), which drop off the ribosome during protein synthesis, or as a result of ribosome stalling. Its function is as follows. Catalyzes the release of premature peptidyl moieties from peptidyl-tRNA molecules trapped in stalled 50S ribosomal subunits, and thus maintains levels of free tRNAs and 50S ribosomes. This chain is Peptidyl-tRNA hydrolase, found in Mycoplasmoides gallisepticum (strain R(low / passage 15 / clone 2)) (Mycoplasma gallisepticum).